The sequence spans 249 residues: Electron transfer flavoprotein subunit beta (249 aa).

This sequence belongs to the ETF beta-subunit/FixA family. In terms of assembly, heterodimer of an alpha and a beta subunit. FAD is required as a cofactor. AMP serves as cofactor.

Its function is as follows. The electron transfer flavoprotein serves as a specific electron acceptor for other dehydrogenases. It transfers the electrons to the main respiratory chain via ETF-ubiquinone oxidoreductase (ETF dehydrogenase). The chain is Electron transfer flavoprotein subunit beta (etfB) from Bradyrhizobium diazoefficiens (strain JCM 10833 / BCRC 13528 / IAM 13628 / NBRC 14792 / USDA 110).